A 530-amino-acid chain; its full sequence is Calcium/calmodulin-dependent protein kinase type II alpha chain (530 aa).

The Protein kinase domain maps to 12–272; it reads DNYDIKEELG…AAEALKHPWI (261 aa). ATP contacts are provided by residues 20-28 and K43; that span reads LGKGAFSIV. The active-site Proton acceptor is the D136. A Phosphothreonine; by autocatalysis modification is found at T287. The calmodulin-binding stretch occupies residues 291–301; it reads LKKFNARRKLK. Phosphothreonine; by autocatalysis occurs at positions 306 and 307. Residues 320-358 form a disordered region; it reads ITKKGEGSQVKESTDSSSTTLEDDDIKEDKKGTVDRSTT. A Phosphoserine modification is found at S327.

This sequence belongs to the protein kinase superfamily. CAMK Ser/Thr protein kinase family. CaMK subfamily. As to quaternary structure, interacts with CASK. In terms of processing, autophosphorylation at Thr-287 is independent of autophosphorylation at Thr-306 and Thr-307. In terms of tissue distribution, expressed at a high level in the central nervous system during the late embryonic stage. In adults, expression is more abundant in the head than in the body.

The enzyme catalyses L-seryl-[protein] + ATP = O-phospho-L-seryl-[protein] + ADP + H(+). It catalyses the reaction L-threonyl-[protein] + ATP = O-phospho-L-threonyl-[protein] + ADP + H(+). Its activity is regulated as follows. CASK plays a role in regulation of CaMKII autophosphorylation. When complexed with CASK and in the presence Ca[2+]/CaM, autophosphorylation of Thr-287 causes constitutive activation of the kinase. In the absence of Ca[2+]/CaM, autophosphorylation of Thr-306 causes inactivation of the kinase. Functionally, a key regulator of plasticity in synaptic physiology and behavior, alterations in its activity produce pleiotrophic effects that involve synaptic transmission and development as well as various aspects of behavior. Directly modulates eag potassium channels. The chain is Calcium/calmodulin-dependent protein kinase type II alpha chain (CaMKII) from Drosophila melanogaster (Fruit fly).